The sequence spans 493 residues: Inosine-5'-monophosphate dehydrogenase (493 aa).

CBS domains follow at residues 97–155 and 159–219; these read VIID…NAPI and MTSE…AKDE. Residues aspartate 253 and 303-305 contribute to the NAD(+) site; that span reads GIG. K(+)-binding residues include glycine 305 and glycine 307. Serine 308 contacts IMP. Cysteine 310 contributes to the K(+) binding site. Residue cysteine 310 is the Thioimidate intermediate of the active site. IMP is bound by residues 343–345, 366–367, and 390–394; these read DGG, GS, and YRGMG. The Proton acceptor role is filled by arginine 406. Glutamate 421 provides a ligand contact to IMP. 3 residues coordinate K(+): glutamate 475, serine 476, and histidine 477.

This sequence belongs to the IMPDH/GMPR family. In terms of assembly, homotetramer. The cofactor is K(+).

It carries out the reaction IMP + NAD(+) + H2O = XMP + NADH + H(+). The protein operates within purine metabolism; XMP biosynthesis via de novo pathway; XMP from IMP: step 1/1. With respect to regulation, mycophenolic acid (MPA) is a non-competitive inhibitor that prevents formation of the closed enzyme conformation by binding to the same site as the amobile flap. In contrast, mizoribine monophosphate (MZP) is a competitive inhibitor that induces the closed conformation. MPA is a potent inhibitor of mammalian IMPDHs but a poor inhibitor of the bacterial enzymes. MZP is a more potent inhibitor of bacterial IMPDH. Its function is as follows. Catalyzes the conversion of inosine 5'-phosphate (IMP) to xanthosine 5'-phosphate (XMP), the first committed and rate-limiting step in the de novo synthesis of guanine nucleotides, and therefore plays an important role in the regulation of cell growth. The chain is Inosine-5'-monophosphate dehydrogenase from Streptococcus pyogenes serotype M1.